We begin with the raw amino-acid sequence, 175 residues long: Vitamin K epoxide reductase complex subunit 1-like protein 1 (175 aa).

At 1-12 (MAAPVLRVSTPR) the chain is on the cytoplasmic side. Residues 13 to 35 (WERIARVLVCLLGILLSLYAFHV) traverse the membrane as a helical segment. Residues 36–86 (EREHARDPSYKALCDVSSSISCSKVFGSRWGRGFGLLGSIFGNDSALNQPN) are Lumenal-facing. Cysteines 49 and 57 form a disulfide. Asn-86 contributes to the (S)-warfarin binding site. The helical transmembrane segment at 87–101 (SVYGIVFYAFQLLLG) threads the bilayer. The Cytoplasmic segment spans residues 102–106 (MTVSA). The chain crosses the membrane as a helical span at residues 107–134 (MAALILMTTSIMSVVGSLYLGYILYFVL). The Lumenal segment spans residues 135–137 (KDL). Cys-138 and Cys-141 are joined by a disulfide. The chain crosses the membrane as a helical span at residues 138-159 (CVICVTTYALNFILFVLNYKRL). Phylloquinone contacts are provided by Cys-141 and Tyr-145. Position 145 (Tyr-145) interacts with (S)-warfarin. Residues 160 to 175 (VYLNEAWKQKLQAKQD) are Cytoplasmic-facing.

It belongs to the VKOR family.

It localises to the endoplasmic reticulum membrane. The enzyme catalyses phylloquinone + [protein]-disulfide + H2O = 2,3-epoxyphylloquinone + [protein]-dithiol. It catalyses the reaction phylloquinol + [protein]-disulfide = phylloquinone + [protein]-dithiol. With respect to regulation, inhibited by warfarin (coumadin). Warfarin locks VKORC1 in both redox states into the closed conformation. Functionally, involved in vitamin K metabolism. Can reduce inactive vitamin K 2,3-epoxide to active vitamin K, and may contribute to vitamin K-mediated protection against oxidative stress. Plays a role in vitamin K-dependent gamma-carboxylation of Glu residues in target proteins. This is Vitamin K epoxide reductase complex subunit 1-like protein 1 (vkorc1l1) from Takifugu rubripes (Japanese pufferfish).